The primary structure comprises 209 residues: Transcription antitermination protein NusB (209 aa).

The protein belongs to the NusB family.

Functionally, involved in transcription antitermination. Required for transcription of ribosomal RNA (rRNA) genes. Binds specifically to the boxA antiterminator sequence of the ribosomal RNA (rrn) operons. This chain is Transcription antitermination protein NusB, found in Crocosphaera subtropica (strain ATCC 51142 / BH68) (Cyanothece sp. (strain ATCC 51142)).